The sequence spans 753 residues: 5-methyltetrahydropteroyltriglutamate--homocysteine methyltransferase (753 aa).

Residues 17–20 and Lys117 contribute to the 5-methyltetrahydropteroyltri-L-glutamate site; that span reads RELK. Residues 431–433 and Glu484 each bind L-homocysteine; that span reads IGS. L-methionine contacts are provided by residues 431–433 and Glu484; that span reads IGS. Residues 515–516 and Trp561 contribute to the 5-methyltetrahydropteroyltri-L-glutamate site; that span reads RC. Asp599 is a binding site for L-homocysteine. L-methionine is bound at residue Asp599. 5-methyltetrahydropteroyltri-L-glutamate is bound at residue Glu605. Residues His641, Cys643, and Glu665 each coordinate Zn(2+). His694 acts as the Proton donor in catalysis. A Zn(2+)-binding site is contributed by Cys726.

The protein belongs to the vitamin-B12 independent methionine synthase family. Zn(2+) is required as a cofactor.

It carries out the reaction 5-methyltetrahydropteroyltri-L-glutamate + L-homocysteine = tetrahydropteroyltri-L-glutamate + L-methionine. It participates in amino-acid biosynthesis; L-methionine biosynthesis via de novo pathway; L-methionine from L-homocysteine (MetE route): step 1/1. Catalyzes the transfer of a methyl group from 5-methyltetrahydrofolate to homocysteine resulting in methionine formation. This chain is 5-methyltetrahydropteroyltriglutamate--homocysteine methyltransferase, found in Escherichia coli O6:H1 (strain CFT073 / ATCC 700928 / UPEC).